The chain runs to 64 residues: Large ribosomal subunit protein uL29 (64 aa).

The protein belongs to the universal ribosomal protein uL29 family.

This chain is Large ribosomal subunit protein uL29, found in Coprothermobacter proteolyticus (strain ATCC 35245 / DSM 5265 / OCM 4 / BT).